The primary structure comprises 119 residues: Large ribosomal subunit protein bL20 (119 aa).

Belongs to the bacterial ribosomal protein bL20 family.

In terms of biological role, binds directly to 23S ribosomal RNA and is necessary for the in vitro assembly process of the 50S ribosomal subunit. It is not involved in the protein synthesizing functions of that subunit. This Clostridium botulinum (strain Alaska E43 / Type E3) protein is Large ribosomal subunit protein bL20.